The primary structure comprises 249 residues: Probable transcriptional regulatory protein FN1661 (249 aa).

Over residues 1-10 (MSGHSKWNNI) the composition is skewed to polar residues. The tract at residues 1–20 (MSGHSKWNNIQHRKGAQDKK) is disordered.

This sequence belongs to the TACO1 family.

Its subcellular location is the cytoplasm. This chain is Probable transcriptional regulatory protein FN1661, found in Fusobacterium nucleatum subsp. nucleatum (strain ATCC 25586 / DSM 15643 / BCRC 10681 / CIP 101130 / JCM 8532 / KCTC 2640 / LMG 13131 / VPI 4355).